The primary structure comprises 242 residues: 7-cyano-7-deazaguanine synthase (242 aa).

An ATP-binding site is contributed by 14–24 (FSGGQDSATCL). Positions 202, 217, 220, and 223 each coordinate Zn(2+).

It belongs to the QueC family. The cofactor is Zn(2+).

The catalysed reaction is 7-carboxy-7-deazaguanine + NH4(+) + ATP = 7-cyano-7-deazaguanine + ADP + phosphate + H2O + H(+). It functions in the pathway purine metabolism; 7-cyano-7-deazaguanine biosynthesis. Its function is as follows. Catalyzes the ATP-dependent conversion of 7-carboxy-7-deazaguanine (CDG) to 7-cyano-7-deazaguanine (preQ(0)). The polypeptide is 7-cyano-7-deazaguanine synthase (Rhodopseudomonas palustris (strain BisA53)).